Consider the following 326-residue polypeptide: tRNA dimethylallyltransferase (326 aa).

10–17 (GPTGTGKT) is an ATP binding site. 12–17 (TGTGKT) lines the substrate pocket. An interaction with substrate tRNA region spans residues 35 to 38 (DSMQ).

Belongs to the IPP transferase family. Monomer. Mg(2+) serves as cofactor.

It carries out the reaction adenosine(37) in tRNA + dimethylallyl diphosphate = N(6)-dimethylallyladenosine(37) in tRNA + diphosphate. Functionally, catalyzes the transfer of a dimethylallyl group onto the adenine at position 37 in tRNAs that read codons beginning with uridine, leading to the formation of N6-(dimethylallyl)adenosine (i(6)A). This Dictyoglomus turgidum (strain DSM 6724 / Z-1310) protein is tRNA dimethylallyltransferase.